The sequence spans 347 residues: DNA-directed RNA polymerase subunit alpha (347 aa).

The alpha N-terminal domain (alpha-NTD) stretch occupies residues 1-243 (MLIKQGERLI…DQISVFINFD (243 aa)). The tract at residues 260 to 347 (VNEHLFKSID…EWKRKQQNEA (88 aa)) is alpha C-terminal domain (alpha-CTD).

The protein belongs to the RNA polymerase alpha chain family. Homodimer. The RNAP catalytic core consists of 2 alpha, 1 beta, 1 beta' and 1 omega subunit. When a sigma factor is associated with the core the holoenzyme is formed, which can initiate transcription.

The enzyme catalyses RNA(n) + a ribonucleoside 5'-triphosphate = RNA(n+1) + diphosphate. Its function is as follows. DNA-dependent RNA polymerase catalyzes the transcription of DNA into RNA using the four ribonucleoside triphosphates as substrates. The sequence is that of DNA-directed RNA polymerase subunit alpha from Desulfovibrio desulfuricans (strain ATCC 27774 / DSM 6949 / MB).